We begin with the raw amino-acid sequence, 296 residues long: Probable endonuclease 4 (296 aa).

Positions 69, 109, 160, 194, 197, 231, 244, 246, and 276 each coordinate Zn(2+).

This sequence belongs to the AP endonuclease 2 family. Zn(2+) serves as cofactor.

It carries out the reaction Endonucleolytic cleavage to 5'-phosphooligonucleotide end-products.. Its function is as follows. Endonuclease IV plays a role in DNA repair. It cleaves phosphodiester bonds at apurinic or apyrimidinic (AP) sites, generating a 3'-hydroxyl group and a 5'-terminal sugar phosphate. This is Probable endonuclease 4 from Sulfurovum sp. (strain NBC37-1).